The following is a 676-amino-acid chain: MAGRSKKKGTSGAAKNYITRTRAVKKLQISLPDFRRLCIFKGIYPREPRNKKKVSKGSTAQTTFYYTKDIQYLLHEPLLAKFREHKSVAKKIGRALGRGEAGDAARLEKNLMPKVKLDHIIKERYPTFVDALRDLDDALSMLFLFANLPSSDHIPAKTIALCQRLTREFEHYVITSHALRKSFLSIKGIYYQATIQGQDILWLVPYRFVQRTGGDIDFRIMGTFVEFYTTLLGFVNYRLYTSVGLVYPPKFNAKSDEQGGELAAFQLEGKANATNGASNDHDDDVEINPEAQAKADKIAAMADDEDEQEVEMAEADAEDDDEEENTEGIDKFEPTAPDADILPQPQASSAEIASLFAPFTFYLAREVPRASLEFILKAFGCKRVGWDSILGDGAFTTNESDPNITHQIVDRPPLANGASAAGAEDAATPQVQWPHSTKPGRTYVQPQWVWDCINQGKLLRPDLYAPGAELPPHLSPWVKPKKGEYDPNLPLAAQQPDGEAEAFEDLADEDEDAFEVDDDEDMDAVADREGSVEVGEGMDVADSDDDDEDDSESDAEGGADGFAGFDDESEAESDISEGEAARLQHQRELEAEATGKKLDVKAPTKKEQNAAIRKKFDKKKRAEEEERDRQKMMLSNKKRKLLKRIEYGENKRDTESENLRRKRTRLEKAKAAAERA.

Residues 298 to 327 (IAAMADDEDEQEVEMAEADAEDDDEEENTE) adopt a coiled-coil conformation. 4 disordered regions span residues 298-338 (IAAM…TAPD), 413-439 (PLAN…STKP), 478-502 (VKPK…EAEA), and 515-676 (EVDD…AERA). The span at 302–327 (ADDEDEQEVEMAEADAEDDDEEENTE) shows a compositional bias: acidic residues. The region spanning 351-466 (EIASLFAPFT…KLLRPDLYAP (116 aa)) is the BRCT domain. Positions 415 to 427 (ANGASAAGAEDAA) are enriched in low complexity. Composition is skewed to acidic residues over residues 515-524 (EVDDDEDMDA), 539-557 (DVAD…DAEG), and 565-577 (FDDE…DISE). Residues 568 to 676 (ESEAESDISE…EKAKAAAERA (109 aa)) are a coiled coil. Basic and acidic residues-rich tracts occupy residues 579–608 (EAAR…KKEQ), 620–631 (KRAEEEERDRQK), 643–659 (KRIE…SENL), and 666–676 (LEKAKAAAERA).

Belongs to the pescadillo family. In terms of assembly, component of the NOP7 complex, composed of ERB1, NOP7 and YTM1. The complex is held together by ERB1, which interacts with NOP7 via its N-terminal domain and with YTM1 via a high-affinity interaction between the seven-bladed beta-propeller domains of the 2 proteins. The NOP7 complex associates with the 66S pre-ribosome.

Its subcellular location is the nucleus. It is found in the nucleolus. The protein resides in the nucleoplasm. Component of the NOP7 complex, which is required for maturation of the 25S and 5.8S ribosomal RNAs and formation of the 60S ribosome. This Phaeosphaeria nodorum (strain SN15 / ATCC MYA-4574 / FGSC 10173) (Glume blotch fungus) protein is Pescadillo homolog.